The chain runs to 280 residues: PsbP domain-containing protein 7, chloroplastic (280 aa).

The transit peptide at 1–36 (MSLKPYFSLLYSSPTNVKLSNFLIAQQPSGDLKTTP) directs the protein to the chloroplast.

This sequence belongs to the PsbP family.

Its subcellular location is the plastid. The protein resides in the chloroplast. The chain is PsbP domain-containing protein 7, chloroplastic (PPD7) from Arabidopsis thaliana (Mouse-ear cress).